Reading from the N-terminus, the 84-residue chain is ATP synthase subunit c (84 aa).

2 helical membrane passes run 9–29 (LGLAIFGCAIGMALAALGCGI) and 57–77 (ILGLAFIESLAIYALVINLII).

This sequence belongs to the ATPase C chain family. As to quaternary structure, F-type ATPases have 2 components, F(1) - the catalytic core - and F(0) - the membrane proton channel. F(1) has five subunits: alpha(3), beta(3), gamma(1), delta(1), epsilon(1). F(0) has three main subunits: a(1), b(2) and c(10-14). The alpha and beta chains form an alternating ring which encloses part of the gamma chain. F(1) is attached to F(0) by a central stalk formed by the gamma and epsilon chains, while a peripheral stalk is formed by the delta and b chains.

Its subcellular location is the cell membrane. Functionally, f(1)F(0) ATP synthase produces ATP from ADP in the presence of a proton or sodium gradient. F-type ATPases consist of two structural domains, F(1) containing the extramembraneous catalytic core and F(0) containing the membrane proton channel, linked together by a central stalk and a peripheral stalk. During catalysis, ATP synthesis in the catalytic domain of F(1) is coupled via a rotary mechanism of the central stalk subunits to proton translocation. Key component of the F(0) channel; it plays a direct role in translocation across the membrane. A homomeric c-ring of between 10-14 subunits forms the central stalk rotor element with the F(1) delta and epsilon subunits. The protein is ATP synthase subunit c of Lawsonia intracellularis (strain PHE/MN1-00).